Consider the following 588-residue polypeptide: Proteasome-associated ATPase (588 aa).

The segment covering 1 to 10 has biased composition (basic and acidic residues); it reads MAAHDDDINR. Residues 1–22 form a disordered region; sequence MAAHDDDINRGTRPARGSEDPA. Residues 47–94 adopt a coiled-coil conformation; that stretch reads RILEERIVELQTNLAGVSAQNERLANTLREARDQIVALKEEVDRLAQP. 276–281 is a binding site for ATP; it reads GCGKTL. A docks into pockets in the proteasome alpha-ring region spans residues 587-588; the sequence is YL.

It belongs to the AAA ATPase family. As to quaternary structure, homohexamer. Assembles into a hexameric ring structure that caps the 20S proteasome core. Strongly interacts with the prokaryotic ubiquitin-like protein Pup through a hydrophobic interface; the interacting region of ARC lies in its N-terminal coiled-coil domain. There is one Pup binding site per ARC hexamer ring. Upon ATP-binding, the C-terminus of ARC interacts with the alpha-rings of the proteasome core, possibly by binding to the intersubunit pockets.

It participates in protein degradation; proteasomal Pup-dependent pathway. In terms of biological role, ATPase which is responsible for recognizing, binding, unfolding and translocation of pupylated proteins into the bacterial 20S proteasome core particle. May be essential for opening the gate of the 20S proteasome via an interaction with its C-terminus, thereby allowing substrate entry and access to the site of proteolysis. Thus, the C-termini of the proteasomal ATPase may function like a 'key in a lock' to induce gate opening and therefore regulate proteolysis. In Streptomyces griseus subsp. griseus (strain JCM 4626 / CBS 651.72 / NBRC 13350 / KCC S-0626 / ISP 5235), this protein is Proteasome-associated ATPase.